Reading from the N-terminus, the 264-residue chain is MKTVIQDTADVYFKRKSDGKLVFTAEAQTASFSQAISEEKLRGGIGNKPLYILKSEKEINLTVKNAFFDLEWLAMTQGETIQEETKVKVFDREHGLIVDDTNKVTLKGKPVSDVTFYNKKGLTYKIAVSTDGTYTIPTAFAAAKDKLTAVYQIEKVGRRLAIKASKFSERYEVEYRTIAYNPDTEEVYSDIYIQFPNVSPSGEFEMSLENGNALAPEIKFEALADTDTDEMAVVIEASRDENTAAPVEDTTGSTQSSDLGGTTE.

An interaction with Bacillus subtilis DSR2 region spans residues 1-76; it reads MKTVIQDTAD…FFDLEWLAMT (76 aa). The interval 237 to 264 is disordered; that stretch reads ASRDENTAAPVEDTTGSTQSSDLGGTTE. Residues 250-264 show a composition bias toward polar residues; it reads TTGSTQSSDLGGTTE.

In terms of assembly, interacts (via N-terminus) as a monomer with Bacillus subtilis defense protein DSR2 (via C-terminus) in a 4:4 DSR2-Tube assembly; this interaction induces a conformation change of the tube protein and activates the NADase activity of DSR2 and leads to an abortive infection.

It is found in the virion. This is Tail tube protein from Bacillus phage SPR (Bacteriophage SPR).